The sequence spans 360 residues: Phenylalanine--tRNA ligase alpha subunit (360 aa).

Position 260 (Glu260) interacts with Mg(2+).

It belongs to the class-II aminoacyl-tRNA synthetase family. Phe-tRNA synthetase alpha subunit type 1 subfamily. In terms of assembly, tetramer of two alpha and two beta subunits. Requires Mg(2+) as cofactor.

The protein localises to the cytoplasm. It catalyses the reaction tRNA(Phe) + L-phenylalanine + ATP = L-phenylalanyl-tRNA(Phe) + AMP + diphosphate + H(+). This Methylobacterium nodulans (strain LMG 21967 / CNCM I-2342 / ORS 2060) protein is Phenylalanine--tRNA ligase alpha subunit.